Consider the following 402-residue polypeptide: Speedy protein E2 (402 aa).

The tract at residues 1–89 (MDRTETRFRK…EEPEKELAPE (89 aa)) is disordered. Polar residues predominate over residues 16-39 (GKITTSRQPHPQNEQSPQRSTSGY). The span at 76 to 89 (DESEEEPEKELAPE) shows a compositional bias: acidic residues.

The protein belongs to the Speedy/Ringo family.

In Homo sapiens (Human), this protein is Speedy protein E2 (SPDYE2).